The primary structure comprises 64 residues: Large ribosomal subunit protein bL35 (64 aa).

The tract at residues 20-42 (GRVKREKMYGSHNLEKKNRKRTR) is disordered. Residues 25–35 (EKMYGSHNLEK) show a composition bias toward basic and acidic residues.

Belongs to the bacterial ribosomal protein bL35 family.

This is Large ribosomal subunit protein bL35 from Chlorobium phaeobacteroides (strain BS1).